The sequence spans 140 residues: Sex-regulated protein janus-B (140 aa).

Residue Arg42 coordinates substrate. His69 (proton acceptor) is an active-site residue. 110–112 lines the substrate pocket; it reads SRT.

This sequence belongs to the janus family.

Its function is as follows. JanA and janB regulate somatic sex differentiation. This is Sex-regulated protein janus-B (janB) from Drosophila teissieri (Fruit fly).